The chain runs to 196 residues: Putative 3-methyladenine DNA glycosylase (196 aa).

This sequence belongs to the DNA glycosylase MPG family.

The sequence is that of Putative 3-methyladenine DNA glycosylase from Bacillus velezensis (strain DSM 23117 / BGSC 10A6 / LMG 26770 / FZB42) (Bacillus amyloliquefaciens subsp. plantarum).